The chain runs to 159 residues: Transcriptional repressor NrdR (159 aa).

A zinc finger lies at 3 to 34 (CPTCQNTDSRVLESRSADTGKSVRRRRECLNC). Residues 49–139 (ISVLKKDGSR…VYRKFNGVKD (91 aa)) enclose the ATP-cone domain.

Belongs to the NrdR family. Zn(2+) is required as a cofactor.

Negatively regulates transcription of bacterial ribonucleotide reductase nrd genes and operons by binding to NrdR-boxes. This Prochlorococcus marinus (strain MIT 9515) protein is Transcriptional repressor NrdR.